A 417-amino-acid polypeptide reads, in one-letter code: Echinulin prenyltransferase 1 (417 aa).

The dimethylallyl diphosphate site is built by Arg90, Lys179, Tyr181, Lys248, Tyr250, Tyr333, Tyr398, and Tyr402.

It belongs to the tryptophan dimethylallyltransferase family.

It catalyses the reaction cyclo(L-tryptophyl-L-alanyl) + dimethylallyl diphosphate = preechinulin + diphosphate. It participates in secondary metabolite biosynthesis. Its pathway is alkaloid biosynthesis. Functionally, prenyltransferase; part of the gene cluster that mediates the biosynthesis of echinulin family alkaloid. The pathway begins with the biosynthesis of the cyclic dipeptide cyclo-L-Trp-L-Ala (cyclo-TA) by the NRPS echPS via condensation of L-alanine and L-tryptophan. The prenyltransferase echPT1 then catalyzes the first prenylation step, a reverse prenylation reaction at C2, to yield preechinulin. Preechinulin is the substrate of the cytochrome P450 monooxygenase echP450 that catalyzes the formation of the double bond between C10 and C11 to produce neoechulin A. The unique prenyltransferase echPT2 functions as a competitive enzyme with echP450 for preechinulin metabolization and uses preechinulin for effective regiospecific prenylations. Preechinulin is prenylated by echPT2 at C5 or C7. C7-prenylation leads to accumulation of tardioxopiperazine B without further modification by echPT2. In contrast, the C5-prenylated tardioxopiperazine A can be prenylated again by echPT2, predominantly at C7 to form echinulin or less frequently at C4 to give variecolorin L. EchPT2 also accepts neoechilunin A to produce varlecolorin G (prenylation at C5) or isoechinulin A (prenylation at C7). EchPT2 further converts isoechinulin A into dehydroechinulin. Moreover, a yet unidentified enzyme can also convert neoechilunin A into neoechilunin B by introducing a double bond between positions C14 and C17 and thus provides a further substrate to echPT2 for C5 and C7 prenylation. This is Echinulin prenyltransferase 1 from Aspergillus ruber (Eurotium rubrum).